A 156-amino-acid polypeptide reads, in one-letter code: Iron sulfur cluster assembly protein 2, mitochondrial (156 aa).

A mitochondrion-targeting transit peptide spans 1-26 (MFARLANPAHFKPLTGSHITRAAKRL).

It belongs to the NifU family. As to quaternary structure, component of the core Fe-S cluster (ISC) assembly machinery. Interacts with frataxin. Interacts with the mitochondrial co-chaperones JAC1 and SSQ1. Interacts with NFS1. Interacts with ferredoxin YAH1; interacts with the reduced form. [2Fe-2S] cluster is required as a cofactor.

Its subcellular location is the mitochondrion matrix. Its pathway is cofactor biosynthesis; iron-sulfur cluster biosynthesis. Functionally, scaffold protein for the de novo synthesis of iron-sulfur (Fe-S) clusters within mitochondria, which is required for maturation of both mitochondrial and cytoplasmic [2Fe-2S] and [4Fe-4S] proteins. First, a [2Fe-2S] cluster is transiently assembled on the scaffold proteins ISU1 and ISU2. In a second step, the cluster is released from ISU1/ISU2, transferred to glutaredoxin GRX5, followed by the formation of mitochondrial [2Fe-2S] proteins, the synthesis of [4Fe-4S] clusters and their target-specific insertion into the recipient apoproteins. Cluster assembly on ISU1/ISU2 depends on the function of the cysteine desulfurase complex NFS1-ISD11, which serves as the sulfur donor for cluster synthesis, the iron-binding protein frataxin (YFH1) as the putative iron donor, and the electron transfer chain comprised of ferredoxin reductase ARH1 and ferredoxin YAH1, which receive their electrons from NADH. Fe-S cluster release from ISU1/ISU2 is achieved by interaction with the Hsp70 chaperone SSQ1, assisted by the DnaJ-like co-chaperone JAC1 and the nucleotide exchange factor MGE1. ISU1 is the major isoform in yeast, while ISU2 is not detectable in cells grown to stationary phase. Also involved in production of a sulfur precursor required for thiolation of cytoplasmic tRNAs. The polypeptide is Iron sulfur cluster assembly protein 2, mitochondrial (Saccharomyces cerevisiae (strain ATCC 204508 / S288c) (Baker's yeast)).